The following is a 268-amino-acid chain: Tryptophan synthase alpha chain (268 aa).

Residues E49 and D60 each act as proton acceptor in the active site.

It belongs to the TrpA family. As to quaternary structure, tetramer of two alpha and two beta chains.

The catalysed reaction is (1S,2R)-1-C-(indol-3-yl)glycerol 3-phosphate + L-serine = D-glyceraldehyde 3-phosphate + L-tryptophan + H2O. The protein operates within amino-acid biosynthesis; L-tryptophan biosynthesis; L-tryptophan from chorismate: step 5/5. Its function is as follows. The alpha subunit is responsible for the aldol cleavage of indoleglycerol phosphate to indole and glyceraldehyde 3-phosphate. This chain is Tryptophan synthase alpha chain, found in Escherichia fergusonii (strain ATCC 35469 / DSM 13698 / CCUG 18766 / IAM 14443 / JCM 21226 / LMG 7866 / NBRC 102419 / NCTC 12128 / CDC 0568-73).